The primary structure comprises 333 residues: Ketol-acid reductoisomerase (NADP(+)) (333 aa).

The KARI N-terminal Rossmann domain maps to 2–182 (ANIYYDDSCD…GGGRAGILET (181 aa)). NADP(+) is bound by residues 25-28 (YGSQ), arginine 48, serine 51, serine 53, and 83-86 (DTIQ). Histidine 108 is an active-site residue. Glycine 134 contributes to the NADP(+) binding site. The KARI C-terminal knotted domain occupies 183–331 (SFREETETDL…TKLRSMMKWL (149 aa)). Mg(2+) contacts are provided by aspartate 191, glutamate 195, glutamate 227, and glutamate 231. Serine 252 provides a ligand contact to substrate.

Belongs to the ketol-acid reductoisomerase family. The cofactor is Mg(2+).

It catalyses the reaction (2R)-2,3-dihydroxy-3-methylbutanoate + NADP(+) = (2S)-2-acetolactate + NADPH + H(+). It carries out the reaction (2R,3R)-2,3-dihydroxy-3-methylpentanoate + NADP(+) = (S)-2-ethyl-2-hydroxy-3-oxobutanoate + NADPH + H(+). The protein operates within amino-acid biosynthesis; L-isoleucine biosynthesis; L-isoleucine from 2-oxobutanoate: step 2/4. Its pathway is amino-acid biosynthesis; L-valine biosynthesis; L-valine from pyruvate: step 2/4. In terms of biological role, involved in the biosynthesis of branched-chain amino acids (BCAA). Catalyzes an alkyl-migration followed by a ketol-acid reduction of (S)-2-acetolactate (S2AL) to yield (R)-2,3-dihydroxy-isovalerate. In the isomerase reaction, S2AL is rearranged via a Mg-dependent methyl migration to produce 3-hydroxy-3-methyl-2-ketobutyrate (HMKB). In the reductase reaction, this 2-ketoacid undergoes a metal-dependent reduction by NADPH to yield (R)-2,3-dihydroxy-isovalerate. The chain is Ketol-acid reductoisomerase (NADP(+)) from Leptospira biflexa serovar Patoc (strain Patoc 1 / Ames).